The sequence spans 314 residues: uncharacterized protein (314 aa).

The segment at 1–70 (MAGNSQRRGA…QGRHKKTDDT (70 aa)) is disordered. The segment covering 43-65 (QRPHHPAGKRAAKAARQAQGRHK) has biased composition (basic residues). Residues G265, I285, and L294 each coordinate S-adenosyl-L-methionine.

The protein belongs to the class IV-like SAM-binding methyltransferase superfamily. RNA methyltransferase TrmH family.

This is an uncharacterized protein from Mycolicibacterium vanbaalenii (strain DSM 7251 / JCM 13017 / BCRC 16820 / KCTC 9966 / NRRL B-24157 / PYR-1) (Mycobacterium vanbaalenii).